The chain runs to 1273 residues: DNA gyrase subunit A (1273 aa).

The region spanning 42–931 (LPEVRDGLKP…VDGDVNDEDL (890 aa)) is the Topo IIA-type catalytic domain. The O-(5'-phospho-DNA)-tyrosine intermediate role is filled by Tyr130. The DOD-type homing endonuclease domain maps to 256-396 (LFGAFISGGF…VQQMLLEFGV (141 aa)). Residues 958–964 (QKRGGKG) carry the GyrA-box motif.

The protein belongs to the type II topoisomerase GyrA/ParC subunit family. In terms of assembly, heterotetramer, composed of two GyrA and two GyrB chains. In the heterotetramer, GyrA contains the active site tyrosine that forms a transient covalent intermediate with the DNA, while GyrB binds cofactors catalyzes ATP hydrolysis. Post-translationally, this protein undergoes a protein self splicing that involves a post-translational excision of the intervening region (intein) followed by peptide ligation.

The protein localises to the cytoplasm. It catalyses the reaction ATP-dependent breakage, passage and rejoining of double-stranded DNA.. DNA supercoiling is inhibited by fluoroquinolones; IC(50) 1 ug/ml for sitafloxacin. A type II topoisomerase that negatively supercoils closed circular double-stranded (ds) DNA in an ATP-dependent manner to modulate DNA topology and maintain chromosomes in an underwound state. Negative supercoiling favors strand separation, and DNA replication, transcription, recombination and repair, all of which involve strand separation. Also able to catalyze the interconversion of other topological isomers of dsDNA rings, including catenanes and knotted rings. Type II topoisomerases break and join 2 DNA strands simultaneously in an ATP-dependent manner. This chain is DNA gyrase subunit A, found in Mycobacterium leprae (strain TN).